A 177-amino-acid polypeptide reads, in one-letter code: ATP synthase subunit delta (177 aa).

The protein belongs to the ATPase delta chain family. In terms of assembly, F-type ATPases have 2 components, F(1) - the catalytic core - and F(0) - the membrane proton channel. F(1) has five subunits: alpha(3), beta(3), gamma(1), delta(1), epsilon(1). F(0) has three main subunits: a(1), b(2) and c(10-14). The alpha and beta chains form an alternating ring which encloses part of the gamma chain. F(1) is attached to F(0) by a central stalk formed by the gamma and epsilon chains, while a peripheral stalk is formed by the delta and b chains.

It is found in the cell inner membrane. F(1)F(0) ATP synthase produces ATP from ADP in the presence of a proton or sodium gradient. F-type ATPases consist of two structural domains, F(1) containing the extramembraneous catalytic core and F(0) containing the membrane proton channel, linked together by a central stalk and a peripheral stalk. During catalysis, ATP synthesis in the catalytic domain of F(1) is coupled via a rotary mechanism of the central stalk subunits to proton translocation. In terms of biological role, this protein is part of the stalk that links CF(0) to CF(1). It either transmits conformational changes from CF(0) to CF(1) or is implicated in proton conduction. The sequence is that of ATP synthase subunit delta from Neisseria gonorrhoeae (strain NCCP11945).